Consider the following 264-residue polypeptide: tRNA pseudouridine synthase A (264 aa).

Asp51 (nucleophile) is an active-site residue. A substrate-binding site is contributed by Tyr109.

Belongs to the tRNA pseudouridine synthase TruA family. In terms of assembly, homodimer.

The enzyme catalyses uridine(38/39/40) in tRNA = pseudouridine(38/39/40) in tRNA. Formation of pseudouridine at positions 38, 39 and 40 in the anticodon stem and loop of transfer RNAs. The polypeptide is tRNA pseudouridine synthase A (Vibrio campbellii (strain ATCC BAA-1116)).